The chain runs to 198 residues: uncharacterized protein (198 aa).

Positions 1-110 (MTGYFLPPQT…GTTVSDDFEG (110 aa)) constitute a PA14 domain.

Belongs to the flocculin family.

This is an uncharacterized protein from Saccharomyces cerevisiae (strain ATCC 204508 / S288c) (Baker's yeast).